An 87-amino-acid polypeptide reads, in one-letter code: Small ribosomal subunit protein uS15c (87 aa).

The protein belongs to the universal ribosomal protein uS15 family. As to quaternary structure, part of the 30S ribosomal subunit.

The protein resides in the plastid. It is found in the chloroplast. This Nymphaea alba (White water-lily) protein is Small ribosomal subunit protein uS15c (rps15).